A 663-amino-acid chain; its full sequence is DNA ligase (663 aa).

NAD(+) contacts are provided by residues aspartate 31–aspartate 35, serine 80–leucine 81, and glutamate 109. Residue lysine 111 is the N6-AMP-lysine intermediate of the active site. NAD(+) is bound by residues arginine 132, glutamate 166, lysine 282, and lysine 306. Zn(2+)-binding residues include cysteine 400, cysteine 403, cysteine 418, and cysteine 423. The BRCT domain maps to glutamate 585–asparagine 663.

This sequence belongs to the NAD-dependent DNA ligase family. LigA subfamily. Requires Mg(2+) as cofactor. Mn(2+) is required as a cofactor.

The enzyme catalyses NAD(+) + (deoxyribonucleotide)n-3'-hydroxyl + 5'-phospho-(deoxyribonucleotide)m = (deoxyribonucleotide)n+m + AMP + beta-nicotinamide D-nucleotide.. Its function is as follows. DNA ligase that catalyzes the formation of phosphodiester linkages between 5'-phosphoryl and 3'-hydroxyl groups in double-stranded DNA using NAD as a coenzyme and as the energy source for the reaction. It is essential for DNA replication and repair of damaged DNA. In Macrococcus caseolyticus (strain JCSC5402) (Macrococcoides caseolyticum), this protein is DNA ligase.